Reading from the N-terminus, the 371-residue chain is UDP-N-acetylglucosamine--N-acetylmuramyl-(pentapeptide) pyrophosphoryl-undecaprenol N-acetylglucosamine transferase (371 aa).

UDP-N-acetyl-alpha-D-glucosamine is bound by residues Thr-15 to Gly-17, Asn-126, Arg-169, Ser-197, and Gln-298.

The protein belongs to the glycosyltransferase 28 family. MurG subfamily.

The protein resides in the cell inner membrane. It catalyses the reaction di-trans,octa-cis-undecaprenyl diphospho-N-acetyl-alpha-D-muramoyl-L-alanyl-D-glutamyl-meso-2,6-diaminopimeloyl-D-alanyl-D-alanine + UDP-N-acetyl-alpha-D-glucosamine = di-trans,octa-cis-undecaprenyl diphospho-[N-acetyl-alpha-D-glucosaminyl-(1-&gt;4)]-N-acetyl-alpha-D-muramoyl-L-alanyl-D-glutamyl-meso-2,6-diaminopimeloyl-D-alanyl-D-alanine + UDP + H(+). The protein operates within cell wall biogenesis; peptidoglycan biosynthesis. Cell wall formation. Catalyzes the transfer of a GlcNAc subunit on undecaprenyl-pyrophosphoryl-MurNAc-pentapeptide (lipid intermediate I) to form undecaprenyl-pyrophosphoryl-MurNAc-(pentapeptide)GlcNAc (lipid intermediate II). In Paramagnetospirillum magneticum (strain ATCC 700264 / AMB-1) (Magnetospirillum magneticum), this protein is UDP-N-acetylglucosamine--N-acetylmuramyl-(pentapeptide) pyrophosphoryl-undecaprenol N-acetylglucosamine transferase.